The following is a 514-amino-acid chain: 2,3-bisphosphoglycerate-independent phosphoglycerate mutase (514 aa).

Mn(2+)-binding residues include Asp-13 and Ser-63. Catalysis depends on Ser-63, which acts as the Phosphoserine intermediate. Substrate-binding positions include His-124, 154 to 155 (RD), Arg-186, Arg-192, 258 to 261 (RADR), and Lys-332. Asp-399, His-403, Asp-440, His-441, and His-459 together coordinate Mn(2+).

It belongs to the BPG-independent phosphoglycerate mutase family. As to quaternary structure, monomer. It depends on Mn(2+) as a cofactor.

The enzyme catalyses (2R)-2-phosphoglycerate = (2R)-3-phosphoglycerate. Its pathway is carbohydrate degradation; glycolysis; pyruvate from D-glyceraldehyde 3-phosphate: step 3/5. In terms of biological role, catalyzes the interconversion of 2-phosphoglycerate and 3-phosphoglycerate. The sequence is that of 2,3-bisphosphoglycerate-independent phosphoglycerate mutase from Legionella pneumophila (strain Corby).